We begin with the raw amino-acid sequence, 748 residues long: Protein REPRESSOR OF SILENCING 3 (748 aa).

The region spanning 10–86 (VRLHVGGLGE…GRLRLEKAKE (77 aa)) is the RRM domain. 4 disordered regions span residues 244–318 (KSIL…QSID), 350–531 (GSSK…VSDT), 579–600 (VDEE…GGSS), and 729–748 (EWAK…NSEE). A compositionally biased stretch (polar residues) spans 266–288 (THPSKNRQTISLEETGRQESSQA). Residues 294-314 (KPSEVVPDKSSDEPSRTKDLE) show a composition bias toward basic and acidic residues. The segment covering 373–382 (LKKKTKRKRV) has biased composition (basic residues). 3 stretches are compositionally biased toward acidic residues: residues 403–416 (DTMA…DSDA), 439–472 (DDSD…DAVE), and 491–518 (ESDD…DVGS). Polar residues predominate over residues 520 to 531 (DSGSLADTVSDT).

Ubiquitously expressed.

It is found in the nucleus. The protein localises to the nucleolus. It localises to the nucleoplasm. Functionally, RNA-binding protein required for DNA demethylation and to eluviate siRNA-mediated transcriptional gene silencing (TGS), probably by guiding ROS1. Can bind specifically single stranded G-rich RNAs of 21-, 24- or 26-nt corresponding to promoter sequence of target genes; this interaction directs demethylation of target sequences. This is Protein REPRESSOR OF SILENCING 3 from Arabidopsis thaliana (Mouse-ear cress).